The primary structure comprises 506 residues: ATP synthase subunit alpha (506 aa).

Gly-170–Thr-177 provides a ligand contact to ATP.

Belongs to the ATPase alpha/beta chains family. In terms of assembly, F-type ATPases have 2 components, CF(1) - the catalytic core - and CF(0) - the membrane proton channel. CF(1) has five subunits: alpha(3), beta(3), gamma(1), delta(1), epsilon(1). CF(0) has four main subunits: a(1), b(1), b'(1) and c(9-12).

The protein resides in the cellular thylakoid membrane. The enzyme catalyses ATP + H2O + 4 H(+)(in) = ADP + phosphate + 5 H(+)(out). In terms of biological role, produces ATP from ADP in the presence of a proton gradient across the membrane. The alpha chain is a regulatory subunit. This Synechococcus sp. (strain WH7803) protein is ATP synthase subunit alpha.